The sequence spans 443 residues: Phosphomevalonate kinase ERG8 (443 aa).

160-170 (ANKTGLGSSAA) contacts ATP.

This sequence belongs to the GHMP kinase family. Mevalonate kinase subfamily.

The enzyme catalyses (R)-5-phosphomevalonate + ATP = (R)-5-diphosphomevalonate + ADP. Its pathway is isoprenoid biosynthesis; isopentenyl diphosphate biosynthesis via mevalonate pathway; isopentenyl diphosphate from (R)-mevalonate: step 2/3. In terms of biological role, phosphomevalonate kinase; part of the second module of ergosterol biosynthesis pathway that includes the middle steps of the pathway. ERG8 converts 5-phosphomevalonate to 5-diphosphomevalonate. The second module is carried out in the vacuole and involves the formation of farnesyl diphosphate, which is also an important intermediate in the biosynthesis of ubiquinone, dolichol, heme and prenylated proteins. Activity by the mevalonate kinase ERG12 (FG05912) first converts mevalonate into 5-phosphomevalonate. 5-phosphomevalonate is then further converted to 5-diphosphomevalonate by the phosphomevalonate kinase ERG8 (FG09764). The diphosphomevalonate decarboxylase ERG19 (FG10424) then produces isopentenyl diphosphate. The isopentenyl-diphosphate delta-isomerase IDI1 (FG09722) then catalyzes the 1,3-allylic rearrangement of the homoallylic substrate isopentenyl (IPP) to its highly electrophilic allylic isomer, dimethylallyl diphosphate (DMAPP). Finally the farnesyl diphosphate synthase ERG20 (FG06784) catalyzes the sequential condensation of isopentenyl pyrophosphate with dimethylallyl pyrophosphate, and then with the resultant geranylpyrophosphate to the ultimate product farnesyl pyrophosphate. The polypeptide is Phosphomevalonate kinase ERG8 (Gibberella zeae (strain ATCC MYA-4620 / CBS 123657 / FGSC 9075 / NRRL 31084 / PH-1) (Wheat head blight fungus)).